Reading from the N-terminus, the 448-residue chain is Asparagine--tRNA ligase (448 aa).

This sequence belongs to the class-II aminoacyl-tRNA synthetase family. In terms of assembly, homodimer.

Its subcellular location is the cytoplasm. The catalysed reaction is tRNA(Asn) + L-asparagine + ATP = L-asparaginyl-tRNA(Asn) + AMP + diphosphate + H(+). This chain is Asparagine--tRNA ligase, found in Streptococcus pyogenes serotype M2 (strain MGAS10270).